A 72-amino-acid polypeptide reads, in one-letter code: Translation initiation factor IF-1 (72 aa).

Residues 1-72 (MAKEESIEVE…SKGRITYRYK (72 aa)) form the S1-like domain.

The protein belongs to the IF-1 family. Component of the 30S ribosomal translation pre-initiation complex which assembles on the 30S ribosome in the order IF-2 and IF-3, IF-1 and N-formylmethionyl-tRNA(fMet); mRNA recruitment can occur at any time during PIC assembly.

It is found in the cytoplasm. In terms of biological role, one of the essential components for the initiation of protein synthesis. Stabilizes the binding of IF-2 and IF-3 on the 30S subunit to which N-formylmethionyl-tRNA(fMet) subsequently binds. Helps modulate mRNA selection, yielding the 30S pre-initiation complex (PIC). Upon addition of the 50S ribosomal subunit IF-1, IF-2 and IF-3 are released leaving the mature 70S translation initiation complex. This chain is Translation initiation factor IF-1, found in Chlorobaculum tepidum (strain ATCC 49652 / DSM 12025 / NBRC 103806 / TLS) (Chlorobium tepidum).